The primary structure comprises 396 residues: Stearoyl-[acyl-carrier-protein] 9-desaturase 5, chloroplastic (396 aa).

The transit peptide at Met1–Arg29 directs the protein to the chloroplast. Fe cation is bound by residues Glu137, Glu175, His178, Glu228, Glu261, and His264.

It belongs to the fatty acid desaturase type 2 family. In terms of assembly, homodimer. Requires Fe(2+) as cofactor. As to expression, ubiquitously expressed with a preference in leaves, flowers and stems.

It is found in the plastid. The protein localises to the chloroplast stroma. The catalysed reaction is octadecanoyl-[ACP] + 2 reduced [2Fe-2S]-[ferredoxin] + O2 + 2 H(+) = (9Z)-octadecenoyl-[ACP] + 2 oxidized [2Fe-2S]-[ferredoxin] + 2 H2O. It functions in the pathway lipid metabolism; fatty acid metabolism. Converts stearoyl-ACP to oleoyl-ACP by introduction of a cis double bond between carbons 9 and 10 of the acyl chain. This chain is Stearoyl-[acyl-carrier-protein] 9-desaturase 5, chloroplastic (S-ACP-DES5), found in Arabidopsis thaliana (Mouse-ear cress).